A 742-amino-acid polypeptide reads, in one-letter code: G2/M phase-specific E3 ubiquitin-protein ligase (742 aa).

A C2HC pre-PHD-type zinc finger spans residues 10 to 50 (SPPCVLCGWTDNCPEKYGEKRTYVEYNLTLHNYCLLMSSGI). A PHD-type 1 zinc finger spans residues 78–127 (LMCNICRKKGASIGCVAPKCKRSYHFPCGLQKECVFQFMEDFRSYCWEHK). The segment at 142–192 (QCTICLDLVEHLPLYSVLRSPCCKNTWFHRECLQYQALSAGIFFFRCAVCN) adopts a PHD-type 2; degenerate zinc-finger fold. The PHD-type 3 zinc finger occupies 236-285 (RCLCKNGRDYNKPDSKWEIKRCQSCGSRGTHLACSSIKSWEQNWECVECR). An HECT domain is found at 417-742 (KGFRQRNFRP…IRSTLRGERE (326 aa)).

Its subcellular location is the nucleus. The protein resides in the nucleolus. It localises to the cytoplasm. It catalyses the reaction S-ubiquitinyl-[E2 ubiquitin-conjugating enzyme]-L-cysteine + [acceptor protein]-L-lysine = [E2 ubiquitin-conjugating enzyme]-L-cysteine + N(6)-ubiquitinyl-[acceptor protein]-L-lysine.. It functions in the pathway protein modification; protein ubiquitination. Its function is as follows. E3 ubiquitin-protein ligase which accepts ubiquitin from an E2 ubiquitin-conjugating enzyme in the form of a thioester and then directly transfers the ubiquitin to targeted substrates. Essential in early embryonic development to prevent apoptotic death. The sequence is that of G2/M phase-specific E3 ubiquitin-protein ligase (G2E3) from Gallus gallus (Chicken).